Consider the following 395-residue polypeptide: RNA polymerase II elongation factor ELL3 (395 aa).

Disordered stretches follow at residues 124–149, 163–182, 194–218, and 233–279; these read SSLQRHNRTEDARDRESWQNVGDYPE, VPDPLASSQGQSLPGSSREH, LPNRDPDQALPPSASQKHVDKKRPA, and LAPS…SLSP. A compositionally biased stretch (basic and acidic residues) spans 130-140; it reads NRTEDARDRES. Residues 168 to 177 are compositionally biased toward polar residues; the sequence is ASSQGQSLPG. Residues 246–258 are compositionally biased toward acidic residues; that stretch reads LQEEDWEQEDKDE. The segment covering 268–277 has biased composition (polar residues); sequence PSVQADSESL. Positions 283–393 constitute an OCEL domain; that stretch reads PDYLLQYRAI…LILEFEEKNR (111 aa).

This sequence belongs to the ELL/occludin family. In terms of assembly, interacts with AFF4. Component of the super elongation complex (SEC), at least composed of EAF1, EAF2, CDK9, MLLT3/AF9, AFF (AFF1 or AFF4), the P-TEFb complex and ELL (ELL, ELL2 or ELL3). Component of the little elongation complex (LEC), at least composed of ELL (ELL, ELL2 or ELL3), ZC3H8, ICE1 and ICE2.

The protein localises to the nucleus. Its function is as follows. Enhancer-binding elongation factor that specifically binds enhancers in embryonic stem cells (ES cells), marks them, and is required for their future activation during stem cell specification. Elongation factor component of the super elongation complex (SEC), a complex required to increase the catalytic rate of RNA polymerase II transcription by suppressing transient pausing by the polymerase at multiple sites along the DNA. Component of the little elongation complex (LEC), a complex required to regulate small nuclear RNA (snRNA) gene transcription by RNA polymerase II and III. Does not only bind to enhancer regions of active genes, but also marks the enhancers that are in a poised or inactive state in ES cells and is required for establishing proper RNA polymerase II occupancy at developmentally regulated genes in a cohesin-dependent manner. Probably required for priming developmentally regulated genes for later recruitment of the super elongation complex (SEC), for transcriptional activation during differentiation. Required for recruitment of P-TEFb within SEC during differentiation. Probably preloaded on germ cell chromatin, suggesting that it may prime gene activation by marking enhancers as early as in the germ cells. Promoting epithelial-mesenchymal transition (EMT). This chain is RNA polymerase II elongation factor ELL3 (ELL3), found in Bos taurus (Bovine).